The primary structure comprises 454 residues: Bifunctional protein GlmU (454 aa).

Residues 1 to 228 (MNKCAIILAA…FEETLGVNSR (228 aa)) form a pyrophosphorylase region. Residues 8–11 (LAAG), Lys22, Gln73, and 78–79 (GT) contribute to the UDP-N-acetyl-alpha-D-glucosamine site. Position 103 (Asp103) interacts with Mg(2+). UDP-N-acetyl-alpha-D-glucosamine contacts are provided by Gly140, Glu154, Asn169, and Asn226. A Mg(2+)-binding site is contributed by Asn226. The linker stretch occupies residues 229 to 249 (AELAKVESIMRNRINRTHLDN). Positions 250–454 (GVTIIDPLNT…EGWVERKKLK (205 aa)) are N-acetyltransferase. Positions 331 and 349 each coordinate UDP-N-acetyl-alpha-D-glucosamine. Catalysis depends on His361, which acts as the Proton acceptor. UDP-N-acetyl-alpha-D-glucosamine is bound by residues Tyr364 and Asn375. Acetyl-CoA-binding positions include 384 to 385 (NY), Ala421, and Arg438.

In the N-terminal section; belongs to the N-acetylglucosamine-1-phosphate uridyltransferase family. It in the C-terminal section; belongs to the transferase hexapeptide repeat family. As to quaternary structure, homotrimer. Mg(2+) is required as a cofactor.

It is found in the cytoplasm. The enzyme catalyses alpha-D-glucosamine 1-phosphate + acetyl-CoA = N-acetyl-alpha-D-glucosamine 1-phosphate + CoA + H(+). It carries out the reaction N-acetyl-alpha-D-glucosamine 1-phosphate + UTP + H(+) = UDP-N-acetyl-alpha-D-glucosamine + diphosphate. It functions in the pathway nucleotide-sugar biosynthesis; UDP-N-acetyl-alpha-D-glucosamine biosynthesis; N-acetyl-alpha-D-glucosamine 1-phosphate from alpha-D-glucosamine 6-phosphate (route II): step 2/2. Its pathway is nucleotide-sugar biosynthesis; UDP-N-acetyl-alpha-D-glucosamine biosynthesis; UDP-N-acetyl-alpha-D-glucosamine from N-acetyl-alpha-D-glucosamine 1-phosphate: step 1/1. It participates in bacterial outer membrane biogenesis; LPS lipid A biosynthesis. Its function is as follows. Catalyzes the last two sequential reactions in the de novo biosynthetic pathway for UDP-N-acetylglucosamine (UDP-GlcNAc). The C-terminal domain catalyzes the transfer of acetyl group from acetyl coenzyme A to glucosamine-1-phosphate (GlcN-1-P) to produce N-acetylglucosamine-1-phosphate (GlcNAc-1-P), which is converted into UDP-GlcNAc by the transfer of uridine 5-monophosphate (from uridine 5-triphosphate), a reaction catalyzed by the N-terminal domain. This chain is Bifunctional protein GlmU, found in Clostridium perfringens (strain ATCC 13124 / DSM 756 / JCM 1290 / NCIMB 6125 / NCTC 8237 / Type A).